We begin with the raw amino-acid sequence, 200 residues long: MARCKS-related protein (200 aa).

A disordered region spans residues 1–200; the sequence is MGSQSSKAPR…PTPASAEQNE (200 aa). A lipid anchor (N-myristoyl glycine) is attached at G2. Position 14 is a phosphothreonine (T14). The span at 16 to 26 shows a compositional bias: low complexity; the sequence is EEAAGASPAKA. 3 positions are modified to phosphoserine: S22, S36, and S48. A compositionally biased stretch (low complexity) spans 53–64; that stretch reads GTDEAAGATGDA. Residue S71 is modified to Phosphoserine. The segment covering 74-85 has biased composition (basic and acidic residues); sequence AEAKGEVAPKET. T85 carries the phosphothreonine modification. The segment covering 86–98 has biased composition (basic residues); sequence PKKKKKFSFKKPF. Residues 87–110 are effector domain involved in lipid-binding and calmodulin-binding; that stretch reads KKKKKFSFKKPFKLSGLSFKRNRK. S93, S101, and S104 each carry phosphoserine; by PKC. S119 bears the Phosphoserine mark. The residue at position 120 (S120) is a Phosphoserine; by MAPK8. S132 and S135 each carry phosphoserine. Position 148 is a phosphothreonine; by MAPK8 (T148). Residues S151, S162, and S165 each carry the phosphoserine modification. The segment covering 156–165 has biased composition (low complexity); the sequence is AKGAEASAAS. T170 is modified (phosphothreonine). A compositionally biased stretch (low complexity) spans 178-200; the sequence is AAEPSTPSGPESGPTPASAEQNE. T183 is subject to Phosphothreonine; by MAPK8. T192 carries the phosphothreonine modification.

This sequence belongs to the MARCKS family. As to quaternary structure, binds to filamentous actin (F-actin), but not to monomeric G-actin, independently of its phosphorylation status. Interacts with calmodulin. Post-translationally, phosphorylated. Phosphorylation at Ser-120 and Thr-183 is non-redundantly catalyzed by MAPK8 in vivo. Phosphorylation at Thr-148 is preferentially catalyzed by MAPK8 in vivo, but this modification can also be catalyzed by other kinases in the absence of MAPK8. May be phosphorylated by protein kinase C, which disrupts the interaction with calmodulin. Expressed at high levels in brain cortex and hippocampus, including dentate gyrus, anterior olfactory nucleus, primary olfactory cortex, entorhinal cortex, medial preoptic area and dorsomedial hypothalamic nucleus (at protein level). Expressed in neuronal cells (at protein level). Detected in the retina. Strongly expressed in testis and uterus; expressed at lower levels in cerebellum, cerebrum, adipose tissue, spleen, kidney, thyroid, liver, lung, skeletal muscle and heart. Detected in T-cells and B-cells.

It localises to the cytoplasm. Its subcellular location is the cytoskeleton. It is found in the cell membrane. In terms of biological role, involved in the control of cell movement by regulating actin cytoskeleton homeostasis and filopodium and lamellipodium formation. When unphosphorylated, induces cell migration. When phosphorylated by MAPK8, induces actin bundles formation and stabilization, thereby reducing actin plasticity, hence restricting cell movement, including neuronal migration. May be involved in coupling the protein kinase C and calmodulin signal transduction systems. The polypeptide is MARCKS-related protein (Marcksl1) (Mus musculus (Mouse)).